The sequence spans 160 residues: NADH-quinone oxidoreductase subunit B (160 aa).

[4Fe-4S] cluster contacts are provided by cysteine 37, cysteine 38, cysteine 102, and cysteine 132.

Belongs to the complex I 20 kDa subunit family. As to quaternary structure, NDH-1 is composed of 14 different subunits. Subunits NuoB, C, D, E, F, and G constitute the peripheral sector of the complex. The cofactor is [4Fe-4S] cluster.

The protein resides in the cell membrane. The enzyme catalyses a quinone + NADH + 5 H(+)(in) = a quinol + NAD(+) + 4 H(+)(out). In terms of biological role, NDH-1 shuttles electrons from NADH, via FMN and iron-sulfur (Fe-S) centers, to quinones in the respiratory chain. Couples the redox reaction to proton translocation (for every two electrons transferred, four hydrogen ions are translocated across the cytoplasmic membrane), and thus conserves the redox energy in a proton gradient. The chain is NADH-quinone oxidoreductase subunit B from Polynucleobacter asymbioticus (strain DSM 18221 / CIP 109841 / QLW-P1DMWA-1) (Polynucleobacter necessarius subsp. asymbioticus).